We begin with the raw amino-acid sequence, 418 residues long: L-rhamnose isomerase (418 aa).

Residues histidine 262, aspartate 294, and aspartate 296 each coordinate Mn(2+).

This sequence belongs to the rhamnose isomerase family. Mn(2+) serves as cofactor.

It is found in the cytoplasm. The enzyme catalyses L-rhamnopyranose = L-rhamnulose. It functions in the pathway carbohydrate degradation; L-rhamnose degradation; glycerone phosphate from L-rhamnose: step 1/3. Functionally, catalyzes the interconversion of L-rhamnose and L-rhamnulose. The sequence is that of L-rhamnose isomerase from Bacteroides thetaiotaomicron (strain ATCC 29148 / DSM 2079 / JCM 5827 / CCUG 10774 / NCTC 10582 / VPI-5482 / E50).